We begin with the raw amino-acid sequence, 2778 residues long: Probable ubiquitin carboxyl-terminal hydrolase FAF (2778 aa).

Residues Met1–Ser85 are disordered. The segment covering Thr10–Gly39 has biased composition (low complexity). Polar residues predominate over residues Gln71–Ser85. Phosphoserine is present on Ser924. The segment at Gly1065–Glu1094 is disordered. Residues Ser1070–Ser1082 are compositionally biased toward low complexity. A USP domain is found at Cys1668–Cys2062. Cys1677 functions as the Nucleophile in the catalytic mechanism. His1986 (proton acceptor) is an active-site residue. Disordered regions lie at residues Val2568–Asn2632 and Ala2644–Leu2691. Low complexity-rich tracts occupy residues Thr2614–Ala2627 and Ala2644–Ala2671. Over residues Asn2672–Leu2691 the composition is skewed to polar residues.

This sequence belongs to the peptidase C19 family. Interacts with imd. Post-translationally, ubiquitinated. Ubiquitination is enhanced by the expression of imd. Eye disks and ovaries. Expressed in larval fat body.

It carries out the reaction Thiol-dependent hydrolysis of ester, thioester, amide, peptide and isopeptide bonds formed by the C-terminal Gly of ubiquitin (a 76-residue protein attached to proteins as an intracellular targeting signal).. Its function is as follows. Ubiquitin C-terminal hydrolase involved in development and the imd/NF-kappa-B (IMD) signaling cascade. Required for eye and embryo development, and plays a role in compound eye assembly and oogenesis respectively. In the larval eye disks, cells outside the assembling facets require this protein for short-range cell interactions that prevent the mystery cells from becoming photoreceptors. Also required for nuclear migration and cellularization in early embryogenesis and could play a role in pole cell determination, development or function. Regulates the IMD signaling cascade at later stages of infection (around 6 hours post-infection) by inhibiting the expression of the antimicrobial peptides Dpt and Dro. Acts by modulating the state of imd polyubiquitination and/or stability; a function which appears to be independent of its enzymatic activity. In turn, imd enhances the polyubiquitination and stability of faf suggesting that they may form a regulatory feedback mechanism within the Imd pathway. In Drosophila melanogaster (Fruit fly), this protein is Probable ubiquitin carboxyl-terminal hydrolase FAF (faf).